Consider the following 850-residue polypeptide: Protein translocase subunit SecA (850 aa).

ATP contacts are provided by residues Gln-87, 105-109 (GEGKT), and Asp-494. Positions 834, 836, 845, and 846 each coordinate Zn(2+).

Belongs to the SecA family. In terms of assembly, monomer and homodimer. Part of the essential Sec protein translocation apparatus which comprises SecA, SecYEG and auxiliary proteins SecDF-YajC and YidC. Zn(2+) is required as a cofactor.

The protein localises to the cell inner membrane. The protein resides in the cytoplasm. It carries out the reaction ATP + H2O + cellular proteinSide 1 = ADP + phosphate + cellular proteinSide 2.. Its function is as follows. Part of the Sec protein translocase complex. Interacts with the SecYEG preprotein conducting channel. Has a central role in coupling the hydrolysis of ATP to the transfer of proteins into and across the cell membrane, serving as an ATP-driven molecular motor driving the stepwise translocation of polypeptide chains across the membrane. The protein is Protein translocase subunit SecA of Desulfotalea psychrophila (strain LSv54 / DSM 12343).